A 97-amino-acid polypeptide reads, in one-letter code: MAKNKLKGQKSRNVFHIASHKTFKAKNKAKPVTTNLKKINIMNHEKVNRMNRAFVNIQKELANFSKSLSLKSVQKELKHHENEPANVDEATRLMAQL.

Position 19 is a phosphoserine (serine 19). Lysine 21 is subject to N6-acetyllysine. Position 69 is a phosphoserine (serine 69).

In terms of assembly, associates with the pre-60S ribosomal particles.

The protein resides in the nucleus. The protein localises to the nucleolus. In terms of biological role, trans-acting factor in ribosome biogenesis required for efficient 40S and 60S subunit production. This chain is Ribosomal biogenesis factor (Rbis), found in Mus musculus (Mouse).